The chain runs to 403 residues: Queuine tRNA-ribosyltransferase catalytic subunit 1 (403 aa).

Ala-2 is subject to N-acetylalanine. Asp-105 (proton acceptor) is an active-site residue. 105-109 (DSGGF) contacts queuine. The residue at position 139 (Ser-139) is a Phosphoserine. Queuine contacts are provided by Asp-159, Gln-202, and Gly-229. The RNA binding stretch occupies residues 260–266 (GVGYATD). Asp-279 (nucleophile) is an active-site residue. The segment at 284–288 (TRTAR) is RNA binding; important for wobble base 34 recognition. Zn(2+) contacts are provided by Cys-317, Cys-319, Cys-322, and His-348.

The protein belongs to the queuine tRNA-ribosyltransferase family. As to quaternary structure, heterodimer of a catalytic subunit QTRT1 and an accessory subunit QTRT2. Requires Zn(2+) as cofactor.

The protein localises to the cytoplasm. It localises to the mitochondrion outer membrane. It carries out the reaction guanosine(34) in tRNA + queuine = queuosine(34) in tRNA + guanine. In terms of biological role, catalytic subunit of the queuine tRNA-ribosyltransferase (TGT) that catalyzes the base-exchange of a guanine (G) residue with queuine (Q) at position 34 (anticodon wobble position) in tRNAs with GU(N) anticodons (tRNA-Asp, -Asn, -His and -Tyr), resulting in the hypermodified nucleoside queuosine (7-(((4,5-cis-dihydroxy-2-cyclopenten-1-yl)amino)methyl)-7-deazaguanosine). Catalysis occurs through a double-displacement mechanism. The nucleophile active site attacks the C1' of nucleotide 34 to detach the guanine base from the RNA, forming a covalent enzyme-RNA intermediate. The proton acceptor active site deprotonates the incoming queuine, allowing a nucleophilic attack on the C1' of the ribose to form the product. In Rattus norvegicus (Rat), this protein is Queuine tRNA-ribosyltransferase catalytic subunit 1.